The sequence spans 199 residues: ATP-dependent Clp protease proteolytic subunit (199 aa).

S98 functions as the Nucleophile in the catalytic mechanism. The active site involves H123.

It belongs to the peptidase S14 family. As to quaternary structure, fourteen ClpP subunits assemble into 2 heptameric rings which stack back to back to give a disk-like structure with a central cavity, resembling the structure of eukaryotic proteasomes.

Its subcellular location is the cytoplasm. It catalyses the reaction Hydrolysis of proteins to small peptides in the presence of ATP and magnesium. alpha-casein is the usual test substrate. In the absence of ATP, only oligopeptides shorter than five residues are hydrolyzed (such as succinyl-Leu-Tyr-|-NHMec, and Leu-Tyr-Leu-|-Tyr-Trp, in which cleavage of the -Tyr-|-Leu- and -Tyr-|-Trp bonds also occurs).. In terms of biological role, cleaves peptides in various proteins in a process that requires ATP hydrolysis. Has a chymotrypsin-like activity. Plays a major role in the degradation of misfolded proteins. The chain is ATP-dependent Clp protease proteolytic subunit from Clostridium botulinum (strain Alaska E43 / Type E3).